Here is a 157-residue protein sequence, read N- to C-terminus: Protein-export protein SecB (157 aa).

Belongs to the SecB family. Homotetramer, a dimer of dimers. One homotetramer interacts with 1 SecA dimer.

Its subcellular location is the cytoplasm. One of the proteins required for the normal export of preproteins out of the cell cytoplasm. It is a molecular chaperone that binds to a subset of precursor proteins, maintaining them in a translocation-competent state. It also specifically binds to its receptor SecA. The protein is Protein-export protein SecB of Shewanella frigidimarina (strain NCIMB 400).